The chain runs to 135 residues: Transcription antitermination protein NusB (135 aa).

It belongs to the NusB family.

Its function is as follows. Involved in transcription antitermination. Required for transcription of ribosomal RNA (rRNA) genes. Binds specifically to the boxA antiterminator sequence of the ribosomal RNA (rrn) operons. The chain is Transcription antitermination protein NusB from Clostridium acetobutylicum (strain ATCC 824 / DSM 792 / JCM 1419 / IAM 19013 / LMG 5710 / NBRC 13948 / NRRL B-527 / VKM B-1787 / 2291 / W).